A 91-amino-acid chain; its full sequence is MSSRRGGGGGGGRITDEEINELISKLQALLPESSRSRGASRSSASKLLKETCSYIKSLHREVDDLSDRLSELMSTMDNNSPQAEIIRSLLR.

The bHLH domain maps to 3-58; that stretch reads SRRGGGGGGGRITDEEINELISKLQALLPESSRSRGASRSSASKLLKETCSYIKSL.

The protein belongs to the bHLH protein family.

Its function is as follows. Atypical and probable non DNA-binding bHLH transcription that integrates multiple signaling pathways to regulate cell elongation and plant development. This chain is Transcription factor ILI3 (ILI3), found in Oryza sativa subsp. indica (Rice).